The sequence spans 353 residues: Photosystem II protein D1 (353 aa).

Thr-2 bears the N-acetylthreonine mark. At Thr-2 the chain carries Phosphothreonine. 3 consecutive transmembrane segments (helical) span residues 29–46 (YIGW…TATS), 118–133 (HFLL…EWEL), and 142–156 (WIAV…AATA). A chlorophyll a-binding site is contributed by His-118. Tyr-126 is a binding site for pheophytin a. 2 residues coordinate [CaMn4O5] cluster: Asp-170 and Glu-189. A helical transmembrane segment spans residues 197–218 (FHMLGVAGVFGGSLFSAMHGSL). Residue His-198 participates in chlorophyll a binding. Residues His-215 and 264-265 (SF) each bind a quinone. Fe cation is bound at residue His-215. His-272 is a binding site for Fe cation. A helical transmembrane segment spans residues 274–288 (FLAAWPVVGIWFTAL). [CaMn4O5] cluster contacts are provided by His-332, Glu-333, and Ala-344. Positions 345-353 (AIEAPAVNG) are excised as a propeptide.

This sequence belongs to the reaction center PufL/M/PsbA/D family. PSII is composed of 1 copy each of membrane proteins PsbA, PsbB, PsbC, PsbD, PsbE, PsbF, PsbH, PsbI, PsbJ, PsbK, PsbL, PsbM, PsbT, PsbX, PsbY, PsbZ, Psb30/Ycf12, at least 3 peripheral proteins of the oxygen-evolving complex and a large number of cofactors. It forms dimeric complexes. Requires The D1/D2 heterodimer binds P680, chlorophylls that are the primary electron donor of PSII, and subsequent electron acceptors. It shares a non-heme iron and each subunit binds pheophytin, quinone, additional chlorophylls, carotenoids and lipids. D1 provides most of the ligands for the Mn4-Ca-O5 cluster of the oxygen-evolving complex (OEC). There is also a Cl(-1) ion associated with D1 and D2, which is required for oxygen evolution. The PSII complex binds additional chlorophylls, carotenoids and specific lipids. as cofactor. Tyr-161 forms a radical intermediate that is referred to as redox-active TyrZ, YZ or Y-Z. In terms of processing, C-terminally processed by CTPA; processing is essential to allow assembly of the oxygen-evolving complex and thus photosynthetic growth.

The protein localises to the plastid. It localises to the chloroplast thylakoid membrane. The catalysed reaction is 2 a plastoquinone + 4 hnu + 2 H2O = 2 a plastoquinol + O2. Photosystem II (PSII) is a light-driven water:plastoquinone oxidoreductase that uses light energy to abstract electrons from H(2)O, generating O(2) and a proton gradient subsequently used for ATP formation. It consists of a core antenna complex that captures photons, and an electron transfer chain that converts photonic excitation into a charge separation. The D1/D2 (PsbA/PsbD) reaction center heterodimer binds P680, the primary electron donor of PSII as well as several subsequent electron acceptors. This Conocephalum japonicum (Liverwort) protein is Photosystem II protein D1.